Here is a 376-residue protein sequence, read N- to C-terminus: Methionine import ATP-binding protein MetN 2 (376 aa).

An ABC transporter domain is found at 34–273; the sequence is VRFINLGKTY…PQHDVSKTLL (240 aa). 70-77 contacts ATP; that stretch reads GRSGAGKS.

It belongs to the ABC transporter superfamily. Methionine importer (TC 3.A.1.24) family. In terms of assembly, the complex is composed of two ATP-binding proteins (MetN), two transmembrane proteins (MetI) and a solute-binding protein (MetQ).

Its subcellular location is the cell inner membrane. It catalyses the reaction L-methionine(out) + ATP + H2O = L-methionine(in) + ADP + phosphate + H(+). The catalysed reaction is D-methionine(out) + ATP + H2O = D-methionine(in) + ADP + phosphate + H(+). Its function is as follows. Part of the ABC transporter complex MetNIQ involved in methionine import. Responsible for energy coupling to the transport system. This chain is Methionine import ATP-binding protein MetN 2, found in Pseudomonas savastanoi pv. phaseolicola (strain 1448A / Race 6) (Pseudomonas syringae pv. phaseolicola (strain 1448A / Race 6)).